We begin with the raw amino-acid sequence, 941 residues long: Probable lipoxygenase 8, chloroplastic (941 aa).

Disordered regions lie at residues 1-22 (MLRP…SSSS) and 45-68 (LIAG…VVRC). Residues 1 to 67 (MLRPQLNPSS…QQGRQRVVVR (67 aa)) constitute a chloroplast transit peptide. The PLAT domain occupies 100 to 236 (AVATIKVTVE…SIDEGTPGKR (137 aa)). One can recognise a Lipoxygenase domain in the interval 242–941 (AYLPGQTPAG…GMGIPNSTSI (700 aa)). Disordered stretches follow at residues 255–274 (YREE…READ) and 288–331 (NPDS…RKGN). Positions 319 to 331 (SKKDPKSETRKGN) are enriched in basic and acidic residues. Positions 598, 603, 790, 794, and 941 each coordinate Fe cation.

It belongs to the lipoxygenase family. Requires Fe cation as cofactor.

Its subcellular location is the plastid. It localises to the chloroplast. It carries out the reaction (9Z,12Z)-octadecadienoate + O2 = (13S)-hydroperoxy-(9Z,11E)-octadecadienoate. It catalyses the reaction (9Z,12Z,15Z)-octadecatrienoate + O2 = (13S)-hydroperoxy-(9Z,11E,15Z)-octadecatrienoate. It functions in the pathway lipid metabolism; oxylipin biosynthesis. Functionally, plant lipoxygenase may be involved in a number of diverse aspects of plant physiology including growth and development, pest resistance, and senescence or responses to wounding. It catalyzes the hydroperoxidation of lipids containing a cis,cis-1,4-pentadiene structure. This chain is Probable lipoxygenase 8, chloroplastic (CM-LOX2), found in Oryza sativa subsp. japonica (Rice).